An 84-amino-acid polypeptide reads, in one-letter code: Putative membrane protein insertion efficiency factor (84 aa).

This sequence belongs to the UPF0161 family.

It localises to the cell membrane. In terms of biological role, could be involved in insertion of integral membrane proteins into the membrane. The sequence is that of Putative membrane protein insertion efficiency factor from Staphylococcus carnosus (strain TM300).